The primary structure comprises 1026 residues: UPF0182 protein FRAAL6027 (1026 aa).

7 helical membrane-spanning segments follow: residues 13 to 33, 60 to 80, 108 to 128, 167 to 187, 208 to 228, 250 to 270, and 283 to 303; these read AKVIVPVLLAVALVIAFVAIF, ILLFLIFGAVMAVVIGTNIVL, YMKLVLVAVAAVFGLAAGLSA, FLLGFLLTAVLLSLLVTVLTH, AHISVLLGLLALLKAWAYYLD, AVLPAKLILLFISLACAVLFI, and LGAGILVLSSVVIGGIYPAFI. Residues 877–888 show a composition bias toward low complexity; the sequence is AAAGAGTGATTT. 2 disordered regions span residues 877 to 916 and 958 to 1026; these read AAAGAGTGATTTTGGGGQATTQGGGTGAAPPGGTSGLQDA and LASP…PPPG. The span at 889–903 shows a compositional bias: gly residues; sequence TGGGGQATTQGGGTG. Over residues 970–1001 the composition is skewed to low complexity; that stretch reads PTPSRSAAPTTRGTAAGSAPPGTTPAVAAPAG. A compositionally biased stretch (pro residues) spans 1016 to 1026; sequence PQQPRAAPPPG.

Belongs to the UPF0182 family.

It localises to the cell membrane. The protein is UPF0182 protein FRAAL6027 of Frankia alni (strain DSM 45986 / CECT 9034 / ACN14a).